Reading from the N-terminus, the 127-residue chain is Fluoride-specific ion channel FluC 1 (127 aa).

The next 3 helical transmembrane spans lie at 6 to 26, 29 to 49, and 95 to 115; these read PLVT…GSNL, FVGL…CGSF, and EWAV…VLVG.

Belongs to the fluoride channel Fluc/FEX (TC 1.A.43) family.

The protein resides in the cell membrane. It catalyses the reaction fluoride(in) = fluoride(out). Functionally, fluoride-specific ion channel. Important for reducing fluoride concentration in the cell, thus reducing its toxicity. The protein is Fluoride-specific ion channel FluC 1 of Haloarcula marismortui (strain ATCC 43049 / DSM 3752 / JCM 8966 / VKM B-1809) (Halobacterium marismortui).